Consider the following 537-residue polypeptide: ATPase expression protein 2, mitochondrial (537 aa).

This sequence belongs to the AEP2 family. As to quaternary structure, binds to the 5'UTR of the OLI1 mRNA.

It localises to the mitochondrion. Required for translation of the mitochondrial OLI1 transcript coding for the mitochondrial ATP synthase subunit 9. This is ATPase expression protein 2, mitochondrial (AEP2) from Eremothecium gossypii (strain ATCC 10895 / CBS 109.51 / FGSC 9923 / NRRL Y-1056) (Yeast).